Consider the following 535-residue polypeptide: Dimethylaniline monooxygenase [N-oxide-forming] 2 (535 aa).

Residue alanine 2 is modified to N-acetylalanine. FAD contacts are provided by residues 9–13, glutamate 32, 40–41, and 61–62; these read GAGVS, VW, and NT. Residues 60 to 61 and 195 to 198 each bind NADP(+); these read TN and SGSD. Lysine 492 is covalently cross-linked (Glycyl lysine isopeptide (Lys-Gly) (interchain with G-Cter in SUMO)). The helical transmembrane segment at 510 to 530 threads the bilayer; that stretch reads FSVSFLLKILGLLAVVVAFFC.

This sequence belongs to the FMO family. FAD serves as cofactor. The cofactor is Mg(2+).

Its subcellular location is the microsome membrane. It localises to the endoplasmic reticulum membrane. Catalyzes the oxidative metabolism of numerous xenobiotics, including mainly therapeutic drugs and insecticides that contain a soft nucleophile, most commonly nitrogen and sulfur and participates to their bioactivation. The polypeptide is Dimethylaniline monooxygenase [N-oxide-forming] 2 (Pan troglodytes (Chimpanzee)).